We begin with the raw amino-acid sequence, 198 residues long: Recombination protein RecR (198 aa).

The C4-type zinc finger occupies 57–72 (CSVCGHITDRDPCYIC). In terms of domain architecture, Toprim spans 80-175 (SVVCVVQEPK…KVTRIAHGLP (96 aa)).

This sequence belongs to the RecR family.

In terms of biological role, may play a role in DNA repair. It seems to be involved in an RecBC-independent recombinational process of DNA repair. It may act with RecF and RecO. The sequence is that of Recombination protein RecR from Bacillus anthracis (strain A0248).